Reading from the N-terminus, the 68-residue chain is Probable tautomerase HP_0924 (68 aa).

The Proton acceptor; via imino nitrogen role is filled by Pro2.

The protein belongs to the 4-oxalocrotonate tautomerase family.

This chain is Probable tautomerase HP_0924, found in Helicobacter pylori (strain ATCC 700392 / 26695) (Campylobacter pylori).